Consider the following 259-residue polypeptide: GEM-like protein 1 (259 aa).

A compositionally biased stretch (basic and acidic residues) spans 1-11 (MSGQENHDHGR). The interval 1 to 79 (MSGQENHDHG…PSPAPRNTMD (79 aa)) is disordered. A compositionally biased stretch (low complexity) spans 13-30 (SSTPAAASEPSKAAAHSS). A GRAM domain is found at 138-215 (KVFKQTFDCL…NQLKAVNPST (78 aa)).

This sequence belongs to the GEM family. In terms of assembly, interacts with AFH1.

The protein is GEM-like protein 1 (FIP1) of Arabidopsis thaliana (Mouse-ear cress).